The following is a 409-amino-acid chain: Arginine deiminase (409 aa).

C399 acts as the Amidino-cysteine intermediate in catalysis.

This sequence belongs to the arginine deiminase family.

It is found in the cytoplasm. It catalyses the reaction L-arginine + H2O = L-citrulline + NH4(+). It functions in the pathway amino-acid degradation; L-arginine degradation via ADI pathway; carbamoyl phosphate from L-arginine: step 1/2. The polypeptide is Arginine deiminase (Borrelia duttonii (strain Ly)).